The chain runs to 612 residues: Dihydroxy-acid dehydratase (612 aa).

D81 contributes to the Mg(2+) binding site. A [2Fe-2S] cluster-binding site is contributed by C122. Residues D123 and K124 each coordinate Mg(2+). An N6-carboxylysine modification is found at K124. C193 is a [2Fe-2S] cluster binding site. E489 contributes to the Mg(2+) binding site. S515 functions as the Proton acceptor in the catalytic mechanism.

It belongs to the IlvD/Edd family. Homodimer. Requires [2Fe-2S] cluster as cofactor. The cofactor is Mg(2+).

It carries out the reaction (2R)-2,3-dihydroxy-3-methylbutanoate = 3-methyl-2-oxobutanoate + H2O. It catalyses the reaction (2R,3R)-2,3-dihydroxy-3-methylpentanoate = (S)-3-methyl-2-oxopentanoate + H2O. Its pathway is amino-acid biosynthesis; L-isoleucine biosynthesis; L-isoleucine from 2-oxobutanoate: step 3/4. The protein operates within amino-acid biosynthesis; L-valine biosynthesis; L-valine from pyruvate: step 3/4. Its function is as follows. Functions in the biosynthesis of branched-chain amino acids. Catalyzes the dehydration of (2R,3R)-2,3-dihydroxy-3-methylpentanoate (2,3-dihydroxy-3-methylvalerate) into 2-oxo-3-methylpentanoate (2-oxo-3-methylvalerate) and of (2R)-2,3-dihydroxy-3-methylbutanoate (2,3-dihydroxyisovalerate) into 2-oxo-3-methylbutanoate (2-oxoisovalerate), the penultimate precursor to L-isoleucine and L-valine, respectively. This chain is Dihydroxy-acid dehydratase, found in Stutzerimonas stutzeri (strain A1501) (Pseudomonas stutzeri).